A 170-amino-acid chain; its full sequence is Large ribosomal subunit protein uL16 (170 aa).

Belongs to the universal ribosomal protein uL16 family.

This is Large ribosomal subunit protein uL16 from Methanospirillum hungatei JF-1 (strain ATCC 27890 / DSM 864 / NBRC 100397 / JF-1).